A 60-amino-acid chain; its full sequence is Metallothionein A (60 aa).

The beta stretch occupies residues 1 to 28 (MDPCQCSKSGTCNCGGSCTCTNCSCKSC). A divalent metal cation-binding residues include Cys4, Cys6, Cys12, Cys14, Cys18, Cys20, Cys23, Cys25, Cys28, Cys32, Cys33, Cys35, Cys36, Cys40, Cys43, Cys47, Cys49, Cys54, Cys58, and Cys59. The alpha stretch occupies residues 29–60 (KKSCCPCCPSGCTKCASGCVCKGKTCDTSCCQ).

It belongs to the metallothionein superfamily. Type 1 family.

In terms of biological role, metallothioneins have a high content of cysteine residues that bind various heavy metals. This is Metallothionein A (mta) from Trematomus bernacchii (Emerald rockcod).